The chain runs to 62 residues: Small ribosomal subunit protein eS27 (62 aa).

Cysteine 17, cysteine 20, cysteine 36, and cysteine 39 together coordinate Zn(2+). A C4-type zinc finger spans residues 17-39; that stretch reads CNDCENEQIIFGSASRKITCVVC.

Belongs to the eukaryotic ribosomal protein eS27 family. Part of the 30S ribosomal subunit. It depends on Zn(2+) as a cofactor.

This Methanosarcina mazei (strain ATCC BAA-159 / DSM 3647 / Goe1 / Go1 / JCM 11833 / OCM 88) (Methanosarcina frisia) protein is Small ribosomal subunit protein eS27.